We begin with the raw amino-acid sequence, 276 residues long: Apulose-4-phosphate transketolase subunit A (276 aa).

This sequence belongs to the transketolase family. As to quaternary structure, probable heterodimer composed of AptA and AptB. Thiamine diphosphate is required as a cofactor.

The enzyme catalyses apulose 4-phosphate + D-glyceraldehyde 3-phosphate = D-xylulose 5-phosphate + dihydroxyacetone phosphate. It functions in the pathway carbohydrate metabolism. Its function is as follows. Involved in catabolism of D-apiose. Catalyzes the transfer of the glycolaldehyde group from apulose-4-phosphate to D-glyceraldehyde 3-phosphate, generating dihydroxyacetone phosphate and D-xylulose-5-phosphate. This is Apulose-4-phosphate transketolase subunit A from Actinobacillus succinogenes (strain ATCC 55618 / DSM 22257 / CCUG 43843 / 130Z).